The following is a 343-amino-acid chain: Cytoplasmic tRNA 2-thiolation protein 1 (343 aa).

Belongs to the TtcA family. CTU1/NCS6/ATPBD3 subfamily.

It localises to the cytoplasm. It participates in tRNA modification; 5-methoxycarbonylmethyl-2-thiouridine-tRNA biosynthesis. In terms of biological role, plays a central role in 2-thiolation of mcm(5)S(2)U at tRNA wobble positions of tRNA(Lys), tRNA(Glu) and tRNA(Gln). Directly binds tRNAs and probably acts by catalyzing adenylation of tRNAs, an intermediate required for 2-thiolation. It is unclear whether it acts as a sulfurtransferase that transfers sulfur from thiocarboxylated URM1 onto the uridine of tRNAs at wobble position. In Drosophila melanogaster (Fruit fly), this protein is Cytoplasmic tRNA 2-thiolation protein 1.